The chain runs to 427 residues: Diaminobutyrate--2-oxoglutarate transaminase (427 aa).

K269 is modified (N6-(pyridoxal phosphate)lysine).

The protein belongs to the class-III pyridoxal-phosphate-dependent aminotransferase family. Requires pyridoxal 5'-phosphate as cofactor.

It carries out the reaction L-2,4-diaminobutanoate + 2-oxoglutarate = L-aspartate 4-semialdehyde + L-glutamate. It participates in amine and polyamine biosynthesis; ectoine biosynthesis; L-ectoine from L-aspartate 4-semialdehyde: step 1/3. Functionally, catalyzes reversively the conversion of L-aspartate beta-semialdehyde (ASA) to L-2,4-diaminobutyrate (DABA) by transamination with L-glutamate. In Halalkalibacterium halodurans (strain ATCC BAA-125 / DSM 18197 / FERM 7344 / JCM 9153 / C-125) (Bacillus halodurans), this protein is Diaminobutyrate--2-oxoglutarate transaminase (ectB).